Reading from the N-terminus, the 298-residue chain is MKPIAAFQEYLEVERQYSPETVTAYLSDLQEFQAFLKANGGFTDFRHVDDLDVQTYLTDLNKQDLARTSIARKISSLRSFYRYLTRIDVVKRNPFELVELKKQHHHLPQFFYEAEIQELFKTVAGKTPLDQRNRALLEVLYGTGIRVSECAKLTLNQVDFNTALLLIHGKGNKDRYVPFGQYAQQALRTYLKDGRQVLMAKSQAQHRYVFVNQYGRPITSRGIEYILDQLIKQTTLTANIHPHMLRHSFATHMLDHGADLRTVQELLGHASLSTTQIYTHVTMAHLKNEYMKYYPKHN.

A Core-binding (CB) domain is found at 1–85 (MKPIAAFQEY…SLRSFYRYLT (85 aa)). Residues 106 to 291 (HLPQFFYEAE…TMAHLKNEYM (186 aa)) form the Tyr recombinase domain. Catalysis depends on residues Arg146, Lys170, His243, Arg246, and His269. Tyr278 (O-(3'-phospho-DNA)-tyrosine intermediate) is an active-site residue.

Belongs to the 'phage' integrase family. XerC subfamily. In terms of assembly, forms a cyclic heterotetrameric complex composed of two molecules of XerC and two molecules of XerD.

The protein resides in the cytoplasm. Site-specific tyrosine recombinase, which acts by catalyzing the cutting and rejoining of the recombining DNA molecules. The XerC-XerD complex is essential to convert dimers of the bacterial chromosome into monomers to permit their segregation at cell division. It also contributes to the segregational stability of plasmids. This Lacticaseibacillus paracasei (strain ATCC 334 / BCRC 17002 / CCUG 31169 / CIP 107868 / KCTC 3260 / NRRL B-441) (Lactobacillus paracasei) protein is Tyrosine recombinase XerC.